Reading from the N-terminus, the 224-residue chain is Orotidine 5'-phosphate decarboxylase (224 aa).

Residues aspartate 10, lysine 32, 59–68 (DLKLHDIPNT), threonine 115, arginine 175, glutamine 184, glycine 204, and arginine 205 each bind substrate. Residue lysine 61 is the Proton donor of the active site.

The protein belongs to the OMP decarboxylase family. Type 1 subfamily. In terms of assembly, homodimer.

The enzyme catalyses orotidine 5'-phosphate + H(+) = UMP + CO2. It participates in pyrimidine metabolism; UMP biosynthesis via de novo pathway; UMP from orotate: step 2/2. Functionally, catalyzes the decarboxylation of orotidine 5'-monophosphate (OMP) to uridine 5'-monophosphate (UMP). The chain is Orotidine 5'-phosphate decarboxylase from Novosphingobium aromaticivorans (strain ATCC 700278 / DSM 12444 / CCUG 56034 / CIP 105152 / NBRC 16084 / F199).